A 308-amino-acid polypeptide reads, in one-letter code: Ribonuclease 3 (308 aa).

The RNase III domain maps to 20–145 (YLRFYKMLGF…LVGAIYLDRG (126 aa)). Glutamate 62 is a Mg(2+) binding site. Residue aspartate 66 is part of the active site. Positions 131 and 134 each coordinate Mg(2+). Glutamate 134 is a catalytic residue. In terms of domain architecture, DRBM spans 173 to 242 (NFKSKLIEWS…ARVALGKIKN (70 aa)). The segment at 261–281 (QEEVTVSDSKPSDSGAVTPDL) is disordered.

It belongs to the ribonuclease III family. As to quaternary structure, homodimer. Mg(2+) serves as cofactor.

It is found in the cytoplasm. The enzyme catalyses Endonucleolytic cleavage to 5'-phosphomonoester.. Functionally, digests double-stranded RNA. Involved in the processing of primary rRNA transcript to yield the immediate precursors to the large and small rRNAs (23S and 16S). Processes some mRNAs, and tRNAs when they are encoded in the rRNA operon. Processes pre-crRNA and tracrRNA of type II CRISPR loci if present in the organism. This Phocaeicola vulgatus (strain ATCC 8482 / DSM 1447 / JCM 5826 / CCUG 4940 / NBRC 14291 / NCTC 11154) (Bacteroides vulgatus) protein is Ribonuclease 3.